A 35-amino-acid polypeptide reads, in one-letter code: Sperm-specific protein Phi-1 (35 aa).

Composition is skewed to basic residues over residues 1–17 and 25–35; these read PSPTRRSKSRSKSRSRS and AAKRAKSKTAK. The segment at 1–35 is disordered; sequence PSPTRRSKSRSKSRSRSRSASAGKAAKRAKSKTAK.

In terms of tissue distribution, sperm.

It is found in the nucleus. Its subcellular location is the chromosome. Functionally, involved in nuclear basic protein transition: histones are replaced by spermatid specific proteins which are themselves replaced by protamines in late spermatids. The polypeptide is Sperm-specific protein Phi-1 (Mytilus californianus (California mussel)).